Reading from the N-terminus, the 151-residue chain is Nucleoside diphosphate kinase (151 aa).

ATP is bound by residues Lys11, Phe59, Arg87, Thr93, Arg104, and Asn114. Residue His117 is the Pros-phosphohistidine intermediate of the active site.

It belongs to the NDK family. Homotetramer. Mg(2+) is required as a cofactor.

It localises to the cytoplasm. It catalyses the reaction a 2'-deoxyribonucleoside 5'-diphosphate + ATP = a 2'-deoxyribonucleoside 5'-triphosphate + ADP. The enzyme catalyses a ribonucleoside 5'-diphosphate + ATP = a ribonucleoside 5'-triphosphate + ADP. Its function is as follows. Major role in the synthesis of nucleoside triphosphates other than ATP. The ATP gamma phosphate is transferred to the NDP beta phosphate via a ping-pong mechanism, using a phosphorylated active-site intermediate. This is Nucleoside diphosphate kinase from Prochlorococcus marinus (strain NATL1A).